Here is a 1050-residue protein sequence, read N- to C-terminus: Self-sufficient cytochrome P450 monooxygenase CYP505E5 (1050 aa).

C405 lines the heme pocket. The segment at 461–495 is disordered; that stretch reads TATGLSRRSMLVARDGSSEESSNHPAEARGDHAPA. The 142-residue stretch at 500-641 folds into the Flavodoxin-like domain; the sequence is VSFFYGSNSG…DLEAWEETSL (142 aa). FMN contacts are provided by residues 506 to 510 and 585 to 617; these read SNSGT and VFGCGHHDWTQTFYRIPILIDDLMYKAGATRLA. The FAD-binding FR-type domain maps to 679-907; the sequence is KGLIEAKVTA…RPAKETFHLP (229 aa).

The protein in the N-terminal section; belongs to the cytochrome P450 family. Requires FAD as cofactor. The cofactor is FMN. It depends on heme as a cofactor.

The enzyme catalyses 2 oxidized [cytochrome P450] + NADPH = 2 reduced [cytochrome P450] + NADP(+) + H(+). The catalysed reaction is an organic molecule + reduced [NADPH--hemoprotein reductase] + O2 = an alcohol + oxidized [NADPH--hemoprotein reductase] + H2O + H(+). It catalyses the reaction dodecanoate + reduced [NADPH--hemoprotein reductase] + O2 = 5-hydroxydodecanoate + oxidized [NADPH--hemoprotein reductase] + H2O + H(+). It carries out the reaction tetradecanoate + reduced [NADPH--hemoprotein reductase] + O2 = 7-hydroxytetradecanoate + oxidized [NADPH--hemoprotein reductase] + H2O + H(+). The enzyme catalyses dodecan-1-ol + reduced [NADPH--hemoprotein reductase] + O2 = 1,5-dodecanediol + oxidized [NADPH--hemoprotein reductase] + H2O + H(+). The catalysed reaction is dodecan-1-ol + reduced [NADPH--hemoprotein reductase] + O2 = 1,4-dodecanediol + oxidized [NADPH--hemoprotein reductase] + H2O + H(+). It catalyses the reaction dodecan-1-ol + reduced [NADPH--hemoprotein reductase] + O2 = 1,6-dodecanediol + oxidized [NADPH--hemoprotein reductase] + H2O + H(+). In terms of biological role, self-sufficient cytochrome P450 monooxygenase that catalyzes the regioselective in-chain hydroxylation of alkanes, fatty alcohols, and fatty acids at the omega-7 position. Performs hydroxylation of C10-C16 n-alkanes and C12 and C14 fatty alcohols; and thereby enables the one step biocatalytic synthesis of rare alcohols such as 5-dodecanol and 7-tetradecanol. Converts 1-dodecanol into 1,5-dodecanediol as major product with very little sub-terminally hydroxylated products with the 1,4-dodecanediol and 1,6-dodecanediol more abundant. Converts dodecanoic acid to 5-hydroxydodecanoic acid which can be further converted into delta-dodecalactone by lactonization of the 5-hydroxy acid at low pH. Also gives sub-terminal hydroxylation of dodecanoic acid with 9-hydroxydodecanoic acid being the second most abundant product. The polypeptide is Self-sufficient cytochrome P450 monooxygenase CYP505E5 (Aspergillus kawachii (strain NBRC 4308) (White koji mold)).